The primary structure comprises 221 residues: Proteasome subunit beta type-1 (221 aa).

Belongs to the peptidase T1B family. As to quaternary structure, the 26S proteasome consists of a 20S proteasome core and two 19S regulatory subunits. The 20S proteasome core is composed of 28 subunits that are arranged in four stacked rings, resulting in a barrel-shaped structure. The two end rings are each formed by seven alpha subunits, and the two central rings are each formed by seven beta subunits. The catalytic chamber with the active sites is on the inside of the barrel.

It is found in the cytoplasm. Its subcellular location is the nucleus. Functionally, non-catalytic component of the proteasome, a multicatalytic proteinase complex which is characterized by its ability to cleave peptides with Arg, Phe, Tyr, Leu, and Glu adjacent to the leaving group at neutral or slightly basic pH. The proteasome has an ATP-dependent proteolytic activity. This Oryza sativa subsp. japonica (Rice) protein is Proteasome subunit beta type-1 (PBF1).